Reading from the N-terminus, the 357-residue chain is DENN domain-containing protein 10 (357 aa).

The 136-residue stretch at 1 to 136 folds into the uDENN domain; that stretch reads MAAVVAMDTQ…IAVLTKGICQ (136 aa). The cDENN domain occupies 152 to 299; sequence KAYLAGSIKD…PEKSDSQVIQ (148 aa). Residues 301 to 357 form the dDENN domain; it reads IALKTKEIFTHLAPFSEVSDDGGKVILNVEALKQQRFPPATENFLYHLAAAEQMLKV.

The protein belongs to the DENND10 family. Interacts with the coiled-coil heterodimer of CCDC22 and CCDC93; the interaction is direct. Interacts with RAB27A and RAB27B (GDP-bound forms preferentially).

The protein localises to the late endosome. Functionally, guanine nucleotide exchange factor (GEF) regulating homeostasis of late endocytic pathway, including endosomal positioning, maturation and secretion, possibly through activating Rab proteins such as RAB27A and RAB27B. Promotes the exchange of GDP to GTP, converting inactive GDP-bound RAB27A and RAB27B into their active GTP-bound form. This Mus musculus (Mouse) protein is DENN domain-containing protein 10.